The sequence spans 920 residues: Isoleucine--tRNA ligase (920 aa).

A 'HIGH' region motif is present at residues 57–67 (PYANGDIHLGH). Glu-560 contributes to the L-isoleucyl-5'-AMP binding site. The 'KMSKS' region motif lies at 601-605 (KMSKS). Lys-604 is an ATP binding site. Residues Cys-890, Cys-893, Cys-910, and Cys-913 each contribute to the Zn(2+) site.

It belongs to the class-I aminoacyl-tRNA synthetase family. IleS type 1 subfamily. As to quaternary structure, monomer. The cofactor is Zn(2+).

The protein resides in the cytoplasm. The catalysed reaction is tRNA(Ile) + L-isoleucine + ATP = L-isoleucyl-tRNA(Ile) + AMP + diphosphate. Catalyzes the attachment of isoleucine to tRNA(Ile). As IleRS can inadvertently accommodate and process structurally similar amino acids such as valine, to avoid such errors it has two additional distinct tRNA(Ile)-dependent editing activities. One activity is designated as 'pretransfer' editing and involves the hydrolysis of activated Val-AMP. The other activity is designated 'posttransfer' editing and involves deacylation of mischarged Val-tRNA(Ile). The sequence is that of Isoleucine--tRNA ligase from Caldicellulosiruptor saccharolyticus (strain ATCC 43494 / DSM 8903 / Tp8T 6331).